Consider the following 155-residue polypeptide: RNA pyrophosphohydrolase (155 aa).

A Nudix hydrolase domain is found at 5-147 (KYRPNVAAII…KRQVYRQVIA (143 aa)). The short motif at 42 to 63 (GGIDEGETPLEALYRELLEEIG) is the Nudix box element.

Belongs to the Nudix hydrolase family. RppH subfamily. The cofactor is a divalent metal cation.

Its function is as follows. Accelerates the degradation of transcripts by removing pyrophosphate from the 5'-end of triphosphorylated RNA, leading to a more labile monophosphorylated state that can stimulate subsequent ribonuclease cleavage. This chain is RNA pyrophosphohydrolase, found in Helicobacter pylori (strain P12).